Consider the following 210-residue polypeptide: Ribosomal RNA small subunit methyltransferase G (210 aa).

Residues Gly-75, Phe-80, 98 to 100 (EST), 126 to 127 (AE), and Arg-141 each bind S-adenosyl-L-methionine.

This sequence belongs to the methyltransferase superfamily. RNA methyltransferase RsmG family.

The protein localises to the cytoplasm. Specifically methylates the N7 position of a guanine in 16S rRNA. This is Ribosomal RNA small subunit methyltransferase G from Solibacter usitatus (strain Ellin6076).